Reading from the N-terminus, the 175-residue chain is Ferritin light chain (175 aa).

At Ser2 the chain carries N-acetylserine. The region spanning 7-156 (QNYSTDVEAA…DHLTNLHRLG (150 aa)) is the Ferritin-like diiron domain. The Fe cation site is built by Glu54, Glu57, Glu58, Glu61, and Glu64. The tract at residues 54-61 (ELAEEKRE) is catalytic site for iron oxidation.

The protein belongs to the ferritin family. As to quaternary structure, oligomer of 24 subunits. There are two types of subunits: L (light) chain and H (heavy) chain. The major chain can be light or heavy, depending on the species and tissue type. The functional molecule forms a roughly spherical shell with a diameter of 12 nm and contains a central cavity into which the insoluble mineral iron core is deposited. Interacts with NCOA4.

Its subcellular location is the cytoplasmic vesicle. It localises to the autophagosome. The protein resides in the cytoplasm. It is found in the autolysosome. Functionally, stores iron in a soluble, non-toxic, readily available form. Important for iron homeostasis. Iron is taken up in the ferrous form and deposited as ferric hydroxides after oxidation. Also plays a role in delivery of iron to cells. Mediates iron uptake in capsule cells of the developing kidney. Delivery to lysosomes by the cargo receptor NCOA4 for autophagic degradation and release or iron. This Pongo abelii (Sumatran orangutan) protein is Ferritin light chain (FTL).